A 287-amino-acid polypeptide reads, in one-letter code: PIH1 domain-containing protein 1 (287 aa).

The protein belongs to the PIH1 family.

Its subcellular location is the nucleus. Functionally, involved in the assembly of C/D box small nucleolar ribonucleoprotein (snoRNP) particles. Recruits the SWI/SNF complex to the core promoter of rRNA genes and enhances pre-rRNA transcription. Mediates interaction of TELO2 with the R2TP complex which is necessary for the stability of MTOR and SMG1. Positively regulates the assembly and activity of the mTORC1 complex. The polypeptide is PIH1 domain-containing protein 1 (pih1d1) (Danio rerio (Zebrafish)).